Consider the following 550-residue polypeptide: Rhodopsin kinase grk7-b (550 aa).

A disordered region spans residues 22–45 (SSEGDAKELQKRRKSLSLPPPDVS). At S36 the chain carries Phosphoserine. In terms of domain architecture, RGS spans 57–174 (YQSICVEQPI…QNSPFYDRFL (118 aa)). The 263-residue stretch at 189–451 (FYEFRILGKG…DDDPRKHAFF (263 aa)) folds into the Protein kinase domain. Residues 195 to 203 (LGKGGFGEV) and K218 contribute to the ATP site. The Proton acceptor role is filled by D314. One can recognise an AGC-kinase C-terminal domain in the interval 452-517 (KSINFQRLEA…GAVPISWQKE (66 aa)). S487 is subject to Phosphoserine. The segment at 531–550 (SREVTGGGNSGEKSGVCSIL) is disordered. Position 547 is a cysteine methyl ester (C547). C547 is lipidated: S-geranylgeranyl cysteine. The propeptide at 548–550 (SIL) is removed in mature form.

This sequence belongs to the protein kinase superfamily. AGC Ser/Thr protein kinase family. GPRK subfamily. Autophosphorylated in vitro at Ser-487. Phosphorylation at Ser-36 is regulated by light and activated by cAMP. In terms of tissue distribution, retina, cones.

The protein localises to the membrane. The enzyme catalyses L-threonyl-[rhodopsin] + ATP = O-phospho-L-threonyl-[rhodopsin] + ADP + H(+). It carries out the reaction L-seryl-[rhodopsin] + ATP = O-phospho-L-seryl-[rhodopsin] + ADP + H(+). Retina-specific kinase involved in the shutoff of the photoresponse and adaptation to changing light conditions via cone opsin phosphorylation, including rhodopsin (RHO). This Xenopus laevis (African clawed frog) protein is Rhodopsin kinase grk7-b (grk7-b).